Reading from the N-terminus, the 351-residue chain is D-alanine--D-alanine ligase (351 aa).

The ATP-grasp domain maps to 135–343; sequence NQIFLQSGQK…MEEVFADLIE (209 aa). 167-222 contributes to the ATP binding site; sequence LMSLGFPQFLKPVEGGSSVSTYKITNQEQLSRQLALIFESDSKVMSQSFLAGTEVS. Mg(2+)-binding residues include aspartate 298, glutamate 310, and asparagine 312.

The protein belongs to the D-alanine--D-alanine ligase family. The cofactor is Mg(2+). It depends on Mn(2+) as a cofactor.

It localises to the cytoplasm. The enzyme catalyses 2 D-alanine + ATP = D-alanyl-D-alanine + ADP + phosphate + H(+). It functions in the pathway cell wall biogenesis; peptidoglycan biosynthesis. Functionally, cell wall formation. The protein is D-alanine--D-alanine ligase of Leptospira borgpetersenii serovar Hardjo-bovis (strain JB197).